Reading from the N-terminus, the 176-residue chain is Cytochrome b (176 aa).

Transmembrane regions (helical) follow at residues 33–53 (FGSLLGICLVLQISTGLFLAM), 77–98 (WVLRYLHANGASMFFICLYLHV), and 113–133 (WNVGVILLFATMATAFMGYVL). 2 residues coordinate heme b: His83 and His97.

The protein belongs to the cytochrome b family. As to quaternary structure, the cytochrome bc1 complex contains 11 subunits: 3 respiratory subunits (MT-CYB, CYC1 and UQCRFS1), 2 core proteins (UQCRC1 and UQCRC2) and 6 low-molecular weight proteins (UQCRH/QCR6, UQCRB/QCR7, UQCRQ/QCR8, UQCR10/QCR9, UQCR11/QCR10 and a cleavage product of UQCRFS1). This cytochrome bc1 complex then forms a dimer. Heme b is required as a cofactor.

The protein resides in the mitochondrion inner membrane. Its function is as follows. Component of the ubiquinol-cytochrome c reductase complex (complex III or cytochrome b-c1 complex) that is part of the mitochondrial respiratory chain. The b-c1 complex mediates electron transfer from ubiquinol to cytochrome c. Contributes to the generation of a proton gradient across the mitochondrial membrane that is then used for ATP synthesis. This chain is Cytochrome b (MT-CYB), found in Corynorhinus rafinesquii (Rafinesque's big-eared bat).